The chain runs to 340 residues: Cathepsin B (340 aa).

The N-terminal stretch at 1–17 is a signal peptide; it reads MSWSRSILCLLGAFANA. Positions 18 to 79 are cleaved as a propeptide — activation peptide; it reads RSIPYYPPLS…ERVDFAEDMD (62 aa). Residue Asn-38 is glycosylated (N-linked (GlcNAc...) asparagine). Intrachain disulfides connect Cys-93–Cys-122, Cys-105–Cys-150, Cys-141–Cys-208, Cys-142–Cys-146, Cys-179–Cys-212, and Cys-187–Cys-198. Residue Cys-108 is part of the active site. N-linked (GlcNAc...) asparagine glycosylation is present at Asn-192. Residues His-279 and Asn-299 contribute to the active site.

The protein belongs to the peptidase C1 family. In terms of assembly, dimer of a heavy chain and a light chain cross-linked by a disulfide bond.

It localises to the lysosome. The catalysed reaction is Hydrolysis of proteins with broad specificity for peptide bonds. Preferentially cleaves -Arg-Arg-|-Xaa bonds in small molecule substrates (thus differing from cathepsin L). In addition to being an endopeptidase, shows peptidyl-dipeptidase activity, liberating C-terminal dipeptides.. Thiol protease which is believed to participate in intracellular degradation and turnover of proteins. Has also been implicated in tumor invasion and metastasis. The polypeptide is Cathepsin B (CTSB) (Gallus gallus (Chicken)).